We begin with the raw amino-acid sequence, 239 residues long: DNA repair protein RecO (239 aa).

It belongs to the RecO family.

Its function is as follows. Involved in DNA repair and RecF pathway recombination. The protein is DNA repair protein RecO of Aromatoleum aromaticum (strain DSM 19018 / LMG 30748 / EbN1) (Azoarcus sp. (strain EbN1)).